The primary structure comprises 636 residues: Protein cueball (636 aa).

Positions 1–27 (MKLCTSQQFGVAVLFIVLNICSPLADA) are cleaved as a signal peptide. Topologically, residues 28–517 (SPIAWDFAVT…ADGPSSLRSG (490 aa)) are extracellular. N83 and N109 each carry an N-linked (GlcNAc...) asparagine glycan. 3 LDL-receptor class B repeats span residues 122–169 (RNLF…DICR), 170–214 (RQLY…DQLS), and 215–260 (DRIF…TEDT). Residue N190 is glycosylated (N-linked (GlcNAc...) asparagine). Residues N285 and N339 are each glycosylated (N-linked (GlcNAc...) asparagine). 2 consecutive EGF-like domains span residues 350-384 (RMDA…ARCE) and 419-456 (EYYK…TRCE). Cystine bridges form between C359–C372, C374–C383, C423–C433, C427–C444, and C446–C455. N449, N458, and N493 each carry an N-linked (GlcNAc...) asparagine glycan. The helical transmembrane segment at 518 to 538 (SVIIVLVVGIVSSLALVAVIV) threads the bilayer. The Cytoplasmic segment spans residues 539–636 (HGLRLIYKPK…IHNMEDDLLT (98 aa)).

The protein belongs to the cueball family.

The protein localises to the cell membrane. Functionally, has a role in spermatogenesis and oogenesis. The protein is Protein cueball of Drosophila virilis (Fruit fly).